The primary structure comprises 225 residues: Uracil-DNA glycosylase (225 aa).

The active-site Proton acceptor is Asp65.

The protein belongs to the uracil-DNA glycosylase (UDG) superfamily. UNG family.

The protein resides in the cytoplasm. It carries out the reaction Hydrolyzes single-stranded DNA or mismatched double-stranded DNA and polynucleotides, releasing free uracil.. Excises uracil residues from the DNA which can arise as a result of misincorporation of dUMP residues by DNA polymerase or due to deamination of cytosine. In Bacillus cereus (strain AH187), this protein is Uracil-DNA glycosylase.